A 66-amino-acid chain; its full sequence is Movement protein TGBp3 (66 aa).

The Lumenal portion of the chain corresponds to Met-1–Asp-2. A helical membrane pass occupies residues Phe-3–Ile-23. The Cytoplasmic portion of the chain corresponds to Asn-24–Asn-66.

It belongs to the Tymovirales TGBp3 protein family.

It localises to the host endoplasmic reticulum membrane. In terms of biological role, plays a role in viral cell-to-cell propagation, by facilitating genome transport to neighboring plant cells through plasmosdesmata. May induce the formation of granular vesicles derived from the Endoplasmic reticulum, which align on actin filaments. The sequence is that of Movement protein TGBp3 from Trifolium (WCMV).